Here is a 138-residue protein sequence, read N- to C-terminus: MSDTLLAFDFGTKSIGVAIGQRITGTARPLPAIKAQDGTPDWTLIERLLKEWQPDEIIVGLPLNMDGTEQPLTARARKFANRIHGRFGVTVTLHDERLSTVEARSGLFERGGYRALNKGKVDSASAVIILESYFEQGY.

This sequence belongs to the YqgF nuclease family.

The protein localises to the cytoplasm. Its function is as follows. Could be a nuclease involved in processing of the 5'-end of pre-16S rRNA. This is Putative pre-16S rRNA nuclease from Salmonella schwarzengrund (strain CVM19633).